A 255-amino-acid chain; its full sequence is Imidazole glycerol phosphate synthase subunit HisF (255 aa).

Catalysis depends on residues D11 and D130.

This sequence belongs to the HisA/HisF family. Heterodimer of HisH and HisF.

Its subcellular location is the cytoplasm. The enzyme catalyses 5-[(5-phospho-1-deoxy-D-ribulos-1-ylimino)methylamino]-1-(5-phospho-beta-D-ribosyl)imidazole-4-carboxamide + L-glutamine = D-erythro-1-(imidazol-4-yl)glycerol 3-phosphate + 5-amino-1-(5-phospho-beta-D-ribosyl)imidazole-4-carboxamide + L-glutamate + H(+). The protein operates within amino-acid biosynthesis; L-histidine biosynthesis; L-histidine from 5-phospho-alpha-D-ribose 1-diphosphate: step 5/9. Functionally, IGPS catalyzes the conversion of PRFAR and glutamine to IGP, AICAR and glutamate. The HisF subunit catalyzes the cyclization activity that produces IGP and AICAR from PRFAR using the ammonia provided by the HisH subunit. This is Imidazole glycerol phosphate synthase subunit HisF from Syntrophotalea carbinolica (strain DSM 2380 / NBRC 103641 / GraBd1) (Pelobacter carbinolicus).